Here is a 311-residue protein sequence, read N- to C-terminus: Energy-coupling factor transporter ATP-binding protein EcfA2 (311 aa).

Positions 3–265 (IKLKDVKFTF…IAFLEENNLQ (263 aa)) constitute an ABC transporter domain. ATP is bound at residue 40–47 (GQTGSGKT).

The protein belongs to the ABC transporter superfamily. Energy-coupling factor EcfA family. Forms a stable energy-coupling factor (ECF) transporter complex composed of 2 membrane-embedded substrate-binding proteins (S component), 2 ATP-binding proteins (A component) and 2 transmembrane proteins (T component).

The protein resides in the cell membrane. Functionally, ATP-binding (A) component of a common energy-coupling factor (ECF) ABC-transporter complex. Unlike classic ABC transporters this ECF transporter provides the energy necessary to transport a number of different substrates. The chain is Energy-coupling factor transporter ATP-binding protein EcfA2 from Mycoplasmopsis synoviae (strain 53) (Mycoplasma synoviae).